A 102-amino-acid chain; its full sequence is Small ribosomal subunit protein bS18 (102 aa).

Belongs to the bacterial ribosomal protein bS18 family. Part of the 30S ribosomal subunit. Forms a tight heterodimer with protein bS6.

In terms of biological role, binds as a heterodimer with protein bS6 to the central domain of the 16S rRNA, where it helps stabilize the platform of the 30S subunit. The polypeptide is Small ribosomal subunit protein bS18 (Orientia tsutsugamushi (strain Boryong) (Rickettsia tsutsugamushi)).